The following is a 702-amino-acid chain: Polyribonucleotide nucleotidyltransferase 3 (702 aa).

Residues Asp483 and Asp489 each coordinate Mg(2+). Residues 550–609 (PKVTQIKVHPDKVREVIGAGGKVINKIIDETGCKITIENDGTIYVAAPDQESSRRAVEMI) enclose the KH domain. Residues 619–687 (GEVYTGKVIK…PQGKIGLSRK (69 aa)) form the S1 motif domain.

Belongs to the polyribonucleotide nucleotidyltransferase family. Mg(2+) is required as a cofactor.

Its subcellular location is the cytoplasm. It carries out the reaction RNA(n+1) + phosphate = RNA(n) + a ribonucleoside 5'-diphosphate. Its function is as follows. Involved in mRNA degradation. Catalyzes the phosphorolysis of single-stranded polyribonucleotides processively in the 3'- to 5'-direction. The sequence is that of Polyribonucleotide nucleotidyltransferase 3 from Alkaliphilus metalliredigens (strain QYMF).